The following is a 482-amino-acid chain: UDP-glycosyltransferase 1 (482 aa).

Residue Asn-243 is glycosylated (N-linked (GlcNAc...) asparagine). Residues 450 to 470 (IYLVYALVLGSAWWIGKTILG) form a helical membrane-spanning segment.

This sequence belongs to the glycosyltransferase 28 family.

The protein resides in the membrane. It carries out the reaction exophillate aglycone + UDP-alpha-D-glucose = exophillate + UDP + H(+). The protein operates within secondary metabolite biosynthesis. Its function is as follows. Acts as a depside 2-O-glucosyltransferase that catalyzes the first glycosylation step during phaeomoniecin D biosynthesis by producing the intermediate exophillic acid which is further O-galactosylated into phaeomoniecin D by the C-galactosyltransferase OGT2. This chain is UDP-glycosyltransferase 1, found in Phaeomoniella chlamydospora (Phaeoacremonium chlamydosporum).